We begin with the raw amino-acid sequence, 669 residues long: PAN2-PAN3 deadenylation complex subunit PAN3 (669 aa).

The segment covering 1-10 (MATTFGSPSG) has biased composition (polar residues). Residues 1 to 25 (MATTFGSPSGDSRRGVASPRPKGRE) form a disordered region. Residues 25-54 (EAKNTFCRNVTIYGHCRYENSKCRPPHLPD) form a C3H1-type zinc finger. The interval 247–519 (QVMPNSTLPV…DIDNFLGGIS (273 aa)) is pseudokinase domain. Residues R298, 347 to 354 (DYHPNSKS), and 408 to 409 (SK) each bind ATP. The stretch at 520-558 (DQLASVFDSELHAQDTLTNTLGRELESSRIVRLLVKLNM) forms a coiled coil. The tract at residues 559–669 (VNERPELDAS…LIRAGRGQGK (111 aa)) is knob domain.

The protein belongs to the protein kinase superfamily. PAN3 family. As to quaternary structure, homodimer. Forms a heterotrimer with a catalytic subunit PAN2 to form the poly(A)-nuclease (PAN) deadenylation complex. Interacts (via PAM-2 motif) with poly(A)-binding protein PAB1 (via PABC domain), conferring substrate specificity of the enzyme complex.

It localises to the cytoplasm. Its function is as follows. Regulatory subunit of the poly(A)-nuclease (PAN) deadenylation complex, one of two cytoplasmic mRNA deadenylases involved in mRNA turnover. PAN specifically shortens poly(A) tails of RNA and the activity is stimulated by poly(A)-binding protein PAB1. PAN deadenylation is followed by rapid degradation of the shortened mRNA tails by the CCR4-NOT complex. Deadenylated mRNAs are then degraded by two alternative mechanisms, namely exosome-mediated 3'-5' exonucleolytic degradation, or deadenylation-dependent mRNA decaping and subsequent 5'-3' exonucleolytic degradation by XRN1. May also be involved in post-transcriptional maturation of mRNA poly(A) tails. PAN3 acts as a positive regulator for PAN activity, recruiting the catalytic subunit PAN2 to mRNA via its interaction with RNA and with PAB1. The protein is PAN2-PAN3 deadenylation complex subunit PAN3 of Phaeosphaeria nodorum (strain SN15 / ATCC MYA-4574 / FGSC 10173) (Glume blotch fungus).